A 23-amino-acid chain; its full sequence is Apolipophorin-3 (23 aa).

This sequence belongs to the insect apolipophorin-3 family. In terms of assembly, equilibrium between a soluble monomer and a bound lipoprotein form. Apolipophorin-3 associates with lipophorin during lipid loading until each particle contains 9 or 14 molecules of apolipophorin-3. Hemolymph.

The protein localises to the secreted. In terms of biological role, assists in the loading of diacylglycerol, generated from triacylglycerol stores in the fat body through the action of adipokinetic hormone, into lipophorin, the hemolymph lipoprotein. It increases the lipid carrying capacity of lipophorin by covering the expanding hydrophobic surface resulting from diacylglycerol uptake. It thus plays a critical role in the transport of lipids during flight in several species of insects. The protein is Apolipophorin-3 of Melanoplus sanguinipes (Migratory grasshopper).